A 180-amino-acid polypeptide reads, in one-letter code: Adenine phosphoribosyltransferase (180 aa).

This sequence belongs to the purine/pyrimidine phosphoribosyltransferase family. As to quaternary structure, homodimer.

It is found in the cytoplasm. The catalysed reaction is AMP + diphosphate = 5-phospho-alpha-D-ribose 1-diphosphate + adenine. The protein operates within purine metabolism; AMP biosynthesis via salvage pathway; AMP from adenine: step 1/1. Catalyzes a salvage reaction resulting in the formation of AMP, that is energically less costly than de novo synthesis. In Mycolicibacterium paratuberculosis (strain ATCC BAA-968 / K-10) (Mycobacterium paratuberculosis), this protein is Adenine phosphoribosyltransferase.